The sequence spans 211 residues: Ceramide-1-phosphate transfer protein (211 aa).

The an N-acylsphingoid base 1-phosphate site is built by D53, K57, R103, R107, and H147.

The protein belongs to the GLTP family.

It is found in the cytoplasm. The protein resides in the cytosol. The protein localises to the golgi apparatus. It localises to the trans-Golgi network membrane. Its subcellular location is the cell membrane. It is found in the endosome membrane. The protein resides in the nucleus outer membrane. It catalyses the reaction N-(hexadecanoyl)-sphing-4-enine-1-phosphate(in) = N-(hexadecanoyl)-sphing-4-enine-1-phosphate(out). The enzyme catalyses N-(9Z-octadecenoyl)-sphing-4-enine-1-phosphate(in) = N-(9Z-octadecenoyl)-sphing-4-enine-1-phosphate(out). Its function is as follows. Mediates the intracellular transfer of ceramide-1-phosphate (C1P) between organelle membranes and the cell membrane. Required for normal structure of the Golgi stacks. Can bind phosphoceramides with a variety of aliphatic chains, but has a preference for lipids with saturated C16:0 or monounsaturated C18:1 aliphatic chains, and is inefficient with phosphoceramides containing lignoceryl (C24:0). Plays a role in the regulation of the cellular levels of ceramide-1-phosphate, and thereby contributes to the regulation of phospholipase PLA2G4A activity and the release of arachidonic acid. Has no activity with galactosylceramide, lactosylceramide, sphingomyelin, phosphatidylcholine, phosphatidic acid and ceramide. C1P transfer is stimulated by phosphatidylserine in C1P source vesicles. Regulates autophagy and pyroptosis, but not apoptosis. This is Ceramide-1-phosphate transfer protein (cptp) from Danio rerio (Zebrafish).